The primary structure comprises 172 residues: MDLKGLIRDIPNFPKPGIVFRDITTLLSDAEGLRYTIDTLTEKCKAANLSPDYIVGMESRGFLFGVPLAYQLNAGFVPVRKPGKLPAAVHQVEYELEYGTDSLEIHQDALNNHHNVLIVDDLMATGGTAKATADLLEKIGCNVLGFAFIIELKALEGRKKLPNLPIISLVDY.

The protein belongs to the purine/pyrimidine phosphoribosyltransferase family. Homodimer.

The protein localises to the cytoplasm. The enzyme catalyses AMP + diphosphate = 5-phospho-alpha-D-ribose 1-diphosphate + adenine. It functions in the pathway purine metabolism; AMP biosynthesis via salvage pathway; AMP from adenine: step 1/1. Catalyzes a salvage reaction resulting in the formation of AMP, that is energically less costly than de novo synthesis. The chain is Adenine phosphoribosyltransferase from Crocosphaera subtropica (strain ATCC 51142 / BH68) (Cyanothece sp. (strain ATCC 51142)).